The sequence spans 82 residues: Nuclear protein 1 (82 aa).

The tract at residues 1 to 82 is disordered; sequence MATFPPATSA…SERKKRGARR (82 aa). Residues 17 to 28 show a composition bias toward acidic residues; it reads PEDEDSSLDESD. Residues 65–82 carry the Nuclear localization signal motif; that stretch reads KLVTKLQNSERKKRGARR.

This sequence belongs to the NUPR family. Monomer. Directly interacts with MSL1 and binds MORF4L1, two components of histone acetyltransferase complex; the interaction with MORF4L1 may be mediated by MSL1. Interacts with EP300; this interaction enhances the effect of EP300 on PAX2 transcription factor activity. Interacts with PAXIP1; this interaction prevents PAXIP1 inhibition of PAX2 transcription factor activity. Interacts with COPS5; this interaction allows COPS5-dependent CDKN1B nuclear to cytoplasm translocation. Interacts with RNF2. Interacts with FOXO3; this interaction represses FOXO3 transactivation. Interacts with PTMA; negatively regulates apoptotic process. Interacts with MYOD1, EP300 and DDX5; this interaction coordinates the association of anti-proliferative and pro-myogenic proteins at the myogenin promoter. Interacts with TP53; interaction is stress-dependent. Forms a complex with EP300 and TP53; this complex binds CDKN1A promoter leading to transcriptional induction of CDKN1A. In terms of processing, phosphorylated in vitro by PKA and CK. Phosphorylation promotes DNA-binding activity. Acetylated by EP300 in vitro. As to expression, widely expressed, with high levels in liver, pancreas, prostate, ovary, colon, thyroid, spinal cord, trachea and adrenal gland, moderate levels in heart, placenta, lung, skeletal muscle, kidney, testis, small intestine, stomach and lymph node, and low levels in brain, spleen, thymus and bone marrow. Not detected in peripheral blood leukocytes.

It localises to the nucleus. Its subcellular location is the cytoplasm. The protein resides in the perinuclear region. Transcription regulator that converts stress signals into a program of gene expression that empowers cells with resistance to the stress induced by a change in their microenvironment. Thereby participates in the regulation of many processes namely cell-cycle, apoptosis, autophagy and DNA repair responses. Controls cell cycle progression and protects cells from genotoxic stress induced by doxorubicin through the complex formation with TP53 and EP300 that binds CDKN1A promoter leading to transcriptional induction of CDKN1A. Protects pancreatic cancer cells from stress-induced cell death by binding the RELB promoter and activating its transcription, leading to IER3 transactivation. Negatively regulates apoptosis through interaction with PTMA. Inhibits autophagy-induced apoptosis in cardiac cells through FOXO3 interaction, inducing cytoplasmic translocation of FOXO3 thereby preventing the FOXO3 association with the pro-autophagic BNIP3 promoter. Inhibits cell growth and facilitates programmed cell death by apoptosis after adriamycin-induced DNA damage through transactivation of TP53. Regulates methamphetamine-induced apoptosis and autophagy through DDIT3-mediated endoplasmic reticulum stress pathway. Participates in DNA repair following gamma-irradiation by facilitating DNA access of the transcription machinery through interaction with MSL1 leading to inhibition of histone H4' Lys-16' acetylation (H4K16ac). Coactivator of PAX2 transcription factor activity, both by recruiting EP300 to increase PAX2 transcription factor activity and by binding PAXIP1 to suppress PAXIP1-induced inhibition on PAX2. Positively regulates cell cycle progression through interaction with COPS5 inducing cytoplasmic translocation of CDKN1B leading to the CDKN1B degradation. Coordinates, through its interaction with EP300, the assiociation of MYOD1, EP300 and DDX5 to the MYOG promoter, leading to inhibition of cell-cycle progression and myogenic differentiation promotion. Negatively regulates beta cell proliferation via inhibition of cell-cycle regulatory genes expression through the suppression of their promoter activities. Also required for LHB expression and ovarian maturation. Exacerbates CNS inflammation and demyelination upon cuprizone treatment. The sequence is that of Nuclear protein 1 from Homo sapiens (Human).